Consider the following 794-residue polypeptide: ATP-dependent RNA helicase SUPV3L1, mitochondrial (794 aa).

Residues 1-30 (MRRCAWPLLRLSSRVGLALRHGGAVRLRQA) constitute a mitochondrion transit peptide. In terms of domain architecture, Helicase ATP-binding spans 182-322 (EARAIQRKII…AIDLVTELMY (141 aa)). 195 to 202 (GPTNSGKT) contributes to the ATP binding site. The 166-residue stretch at 341–506 (VLDYALESLD…GLHPTPEQIE (166 aa)) folds into the Helicase C-terminal domain. Disordered regions lie at residues 678–741 (EVMS…HGRG) and 764–794 (EWQD…KKKK). Residues 689 to 704 (TKRDARTVSDHRDAKS) show a composition bias toward basic and acidic residues.

It belongs to the helicase family. Mg(2+) serves as cofactor. The cofactor is Mn(2+).

It localises to the nucleus. It is found in the mitochondrion matrix. The protein resides in the mitochondrion nucleoid. The enzyme catalyses ATP + H2O = ADP + phosphate + H(+). Functionally, major helicase player in mitochondrial RNA metabolism. Component of the mitochondrial degradosome (mtEXO) complex, that degrades 3' overhang double-stranded RNA with a 3'-to-5' directionality in an ATP-dependent manner. ATPase and ATP-dependent multisubstrate helicase, able to unwind double-stranded (ds) DNA and RNA, and RNA/DNA heteroduplexes in the 5'-to-3' direction. Plays a role in the RNA surveillance system in mitochondria; regulates the stability of mature mRNAs, the removal of aberrantly formed mRNAs and the rapid degradation of non coding processing intermediates. Also implicated in recombination and chromatin maintenance pathways. May protect cells from apoptosis. Associates with mitochondrial DNA. The sequence is that of ATP-dependent RNA helicase SUPV3L1, mitochondrial (SUPV3L1) from Gallus gallus (Chicken).